We begin with the raw amino-acid sequence, 436 residues long: GTPase Der (436 aa).

EngA-type G domains follow at residues 4-167 (PVVA…PKRG) and 176-351 (IKFC…ENHA). GTP contacts are provided by residues 10–17 (GRPNVGKS), 57–61 (DTGGI), 119–122 (NKID), 182–189 (GRPNVGKS), 229–233 (DTAGM), and 294–297 (NKWD). The region spanning 352–436 (MRVQTNVLNE…PIKIIARPRK (85 aa)) is the KH-like domain.

Belongs to the TRAFAC class TrmE-Era-EngA-EngB-Septin-like GTPase superfamily. EngA (Der) GTPase family. As to quaternary structure, associates with the 50S ribosomal subunit.

Functionally, GTPase that plays an essential role in the late steps of ribosome biogenesis. The polypeptide is GTPase Der (Geobacillus sp. (strain WCH70)).